The sequence spans 590 residues: MNKIHLLDEKTVNKIAAGEVVERPASIVKELVENSIDAGSKNITVEILEGGIPYIKVTDDGCGMNEIDAVLAFERHATSKIRSDEDLFNITTLGFRGEALASIAAVSKVVLQTKEENETFGTRLVVEGGKILEKTRCGCQKGTSVEVKDVFFNTPARRKFLKRPSTEAMYVTEVVTRLCLSNPGISFKYVKDKKVQFITSGNGSIEDVILRLFGKEVHSALIFSEFEAEDLKVKAFATKNFLNYSNRNMQFFYVNGRYVKNKTLSAAVDEAFKTYVPSDRYPGVFLYLEINPRFIDVNIHPSKLEVKFSDDRRIFESVYRTIREALRESNLIPEVKLEKDLKNEEGQIGEQVKLSLPLFEVKEKTDDGAIFVREEVKTEEKIDKAPKHESSSDSERNVKRLSDIRIVGTLFSTYVIVEKGDVFYIIDQHAAHERILYEKLVSQYERVQSRQVTFPIVVELQPGDMEIVGQERELLYKLGYVFEEFGNNSVVLREVPVILGQPEAKKLFVEIVERLRDKDFSSKVSFKEEEIATMACKAAVKAMDTLSENEIYKLFEDLKIAENPYTCPHGRPVIISMTKTQLEKMFKRIK.

Belongs to the DNA mismatch repair MutL/HexB family.

This protein is involved in the repair of mismatches in DNA. It is required for dam-dependent methyl-directed DNA mismatch repair. May act as a 'molecular matchmaker', a protein that promotes the formation of a stable complex between two or more DNA-binding proteins in an ATP-dependent manner without itself being part of a final effector complex. The chain is DNA mismatch repair protein MutL from Caldanaerobacter subterraneus subsp. tengcongensis (strain DSM 15242 / JCM 11007 / NBRC 100824 / MB4) (Thermoanaerobacter tengcongensis).